A 727-amino-acid chain; its full sequence is Broad-complex core protein isoforms 1/2/3/4/5 (727 aa).

The BTB domain occupies V32 to Q97. The span at N135–L149 shows a compositional bias: polar residues. Disordered regions lie at residues N135–S185, R218–G378, I445–A496, P532–P583, and S604–L626. A compositionally biased stretch (low complexity) spans S227 to S238. Residues T281–N298 show a composition bias toward gly residues. Positions N341–N355 are enriched in basic and acidic residues. 3 stretches are compositionally biased toward low complexity: residues I445–N460, T475–T495, and Q533–Q568. C2H2-type zinc fingers lie at residues F636–H659 and P666–H689. Residues Q694 to S727 form a disordered region. The segment covering H713–S727 has biased composition (low complexity).

It localises to the nucleus. Broad-complex proteins are required for puffing and transcription of salivary gland late genes during metamorphosis. The sequence is that of Broad-complex core protein isoforms 1/2/3/4/5 (br) from Drosophila melanogaster (Fruit fly).